A 529-amino-acid polypeptide reads, in one-letter code: Hyaluronidase PH-20 (529 aa).

Residues 1 to 35 form the signal peptide; the sequence is MGAFTFKHSFFGSFVECSGVLQTVFIFLLIPCCLA. 2 cysteine pairs are disulfide-bonded: Cys-59–Cys-351 and Cys-223–Cys-237. The N-linked (GlcNAc...) asparagine glycan is linked to Asn-81. Glu-147 (proton donor) is an active-site residue. N-linked (GlcNAc...) asparagine glycosylation is found at Asn-165 and Asn-179. N-linked (GlcNAc...) asparagine glycans are attached at residues Asn-253 and Asn-368. 3 disulfides stabilise this stretch: Cys-376–Cys-387, Cys-381–Cys-435, and Cys-437–Cys-464. A glycan (N-linked (GlcNAc...) asparagine) is linked at Asn-401. The tract at residues 478–502 is disordered; the sequence is DEPPITDDTSQNQDSISDITSSAPP. The segment covering 487-502 has biased composition (polar residues); the sequence is SQNQDSISDITSSAPP. Ser-492 carries the GPI-anchor amidated serine lipid modification. A propeptide spans 493–529 (removed in mature form); it reads ISDITSSAPPSSHILPKDLSWCLFLLSIFSQHWKYLL.

The protein belongs to the glycosyl hydrolase 56 family. Post-translationally, endoproteolysis (toward the C-terminus producing two disulfide-linked fragments) could activate PH-20. Testis.

It is found in the cell membrane. The enzyme catalyses Random hydrolysis of (1-&gt;4)-linkages between N-acetyl-beta-D-glucosamine and D-glucuronate residues in hyaluronate.. Its function is as follows. Involved in sperm-egg adhesion. Upon fertilization sperm must first penetrate a layer of cumulus cells that surrounds the egg before reaching the zona pellucida. The cumulus cells are embedded in a matrix containing hyaluronic acid which is formed prior to ovulation. This protein aids in penetrating the layer of cumulus cells by digesting hyaluronic acid. The chain is Hyaluronidase PH-20 (SPAM1) from Cavia porcellus (Guinea pig).